We begin with the raw amino-acid sequence, 106 residues long: Iron-sulfur cluster assembly protein CyaY (106 aa).

This sequence belongs to the frataxin family.

Its function is as follows. Involved in iron-sulfur (Fe-S) cluster assembly. May act as a regulator of Fe-S biogenesis. This chain is Iron-sulfur cluster assembly protein CyaY, found in Cronobacter sakazakii (strain ATCC BAA-894) (Enterobacter sakazakii).